The primary structure comprises 465 residues: Phosphatidylserine synthase 1 (465 aa).

Residues 1-35 (MATTFRSQTLSKDDVNYRMHFRMINEQQVEDITIQ) lie on the Cytoplasmic side of the membrane. Residues 36-56 (FFYKPHTISLLTVTVLSLMYF) form a helical membrane-spanning segment. Over 57-70 (AFTRDDGDPDSNLR) the chain is Lumenal. A helical transmembrane segment spans residues 71-91 (VGLILLVSFFLVISVLAFPNG). Over 92–102 (PFTRPHPAIWR) the chain is Cytoplasmic. A helical membrane pass occupies residues 103–123 (IVFGLSVLYFLFLVFIIFLNW). At 124 to 286 (DQVKALMFWL…WLDPKSSLQR (163 aa)) the chain is on the lumenal side. Residues 287–307 (VMGVYLFMIIWQLTELNTFFL) traverse the membrane as a helical segment. The Cytoplasmic segment spans residues 308-309 (KH). The helical transmembrane segment at 310–330 (IFVFPACHALSWCRILFIGII) threads the bilayer. Topologically, residues 331-355 (TAPTVRQYYAYLTDTQCKRVGTQCW) are lumenal. The helical transmembrane segment at 356 to 376 (VFGAIAFLEALACIKFGQDLF) threads the bilayer. The Cytoplasmic segment spans residues 377–380 (SKTQ). Residues 381-401 (ILYVILWLVCLAFITFLCLYV) traverse the membrane as a helical segment. At 402 to 465 (MVWYAENYGP…DSRTINGMEK (64 aa)) the chain is on the lumenal side. The tract at residues 446-465 (CSTRKRRDSGDSRTINGMEK) is disordered.

Belongs to the phosphatidyl serine synthase family.

The protein localises to the endoplasmic reticulum membrane. It carries out the reaction a 1,2-diacyl-sn-glycero-3-phosphoethanolamine + L-serine = a 1,2-diacyl-sn-glycero-3-phospho-L-serine + ethanolamine. The catalysed reaction is a 1,2-diacyl-sn-glycero-3-phosphocholine + L-serine = a 1,2-diacyl-sn-glycero-3-phospho-L-serine + choline. Its pathway is phospholipid metabolism; phosphatidylserine biosynthesis. Functionally, catalyzes a base-exchange reaction in which the polar head group of phosphatidylethanolamine (PE) or phosphatidylcholine (PC) is replaced by L-serine. Catalyzes mainly the conversion of phosphatidylcholine but also converts, in vitro and to a lesser extent, phosphatidylethanolamine. The sequence is that of Phosphatidylserine synthase 1 (ptdss1) from Danio rerio (Zebrafish).